The primary structure comprises 1196 residues: Truncated transposon Ty1-A Gag-Pol polyprotein (1196 aa).

Positions 101 to 276 constitute an Integrase catalytic domain; sequence NSYEPFQYLH…AGLDISTLLP (176 aa). 2 residues coordinate Mg(2+): aspartate 112 and aspartate 177. Disordered regions lie at residues 397-528, 533-552, and 571-628; these read SKAV…ETEK, RSPSIDASPPENNSSHNIVP, and DLPL…DNET. A compositionally biased stretch (low complexity) spans 401–410; the sequence is SPTDSTPPST. Positions 446–456 are enriched in polar residues; the sequence is STPQISNIEST. The span at 479–494 shows a compositional bias: basic and acidic residues; sequence ESSHASKSKDFRHSDS. 2 stretches are compositionally biased toward polar residues: residues 495-523 and 542-552; these read YSENETNHTNVPISSTGGTNNKTVPQISD and PENNSSHNIVP. The Bipartite nuclear localization signal signature appears at 619–653; the sequence is KKRSLEDNETEIKVSRDTWNTKNMRSLEPPRSKKR. The Reverse transcriptase Ty1/copia-type domain maps to 779 to 917; the sequence is NNYYITQLDI…DILGLEIKYQ (139 aa). Residues aspartate 787, aspartate 868, aspartate 869, aspartate 1051, glutamate 1093, and aspartate 1126 each contribute to the Mg(2+) site. The RNase H Ty1/copia-type domain occupies 1051 to 1193; sequence DASYGNQPYY…IKTFKLLTNK (143 aa).

Initially, virus-like particles (VLPs) are composed of the structural unprocessed proteins Gag and Gag-Pol, and also contain the host initiator methionine tRNA (tRNA(i)-Met) which serves as a primer for minus-strand DNA synthesis, and a dimer of genomic Ty RNA. Processing of the polyproteins occurs within the particle and proceeds by an ordered pathway, called maturation. First, the protease (PR) is released by autocatalytic cleavage of the Gag-Pol polyprotein yielding capsid protein p45 and a Pol-p154 precursor protein. This cleavage is a prerequisite for subsequent processing of Pol-p154 at the remaining sites to release the mature structural and catalytic proteins. Maturation takes place prior to the RT reaction and is required to produce transposition-competent VLPs.

Its subcellular location is the cytoplasm. It localises to the nucleus. The enzyme catalyses DNA(n) + a 2'-deoxyribonucleoside 5'-triphosphate = DNA(n+1) + diphosphate. The catalysed reaction is Endonucleolytic cleavage to 5'-phosphomonoester.. Functionally, reverse transcriptase/ribonuclease H (RT) is a multifunctional enzyme that catalyzes the conversion of the retro-elements RNA genome into dsDNA within the VLP. The enzyme displays a DNA polymerase activity that can copy either DNA or RNA templates, and a ribonuclease H (RNase H) activity that cleaves the RNA strand of RNA-DNA heteroduplexes during plus-strand synthesis and hydrolyzes RNA primers. The conversion leads to a linear dsDNA copy of the retrotransposon that includes long terminal repeats (LTRs) at both ends. Integrase (IN) targets the VLP to the nucleus, where a subparticle preintegration complex (PIC) containing at least integrase and the newly synthesized dsDNA copy of the retrotransposon must transit the nuclear membrane. Once in the nucleus, integrase performs the integration of the dsDNA into the host genome. The polypeptide is Truncated transposon Ty1-A Gag-Pol polyprotein (TY1B-A) (Saccharomyces cerevisiae (strain ATCC 204508 / S288c) (Baker's yeast)).